The sequence spans 252 residues: SIGTGYDLSSTTFSPDGRVFQVEYAAKAVDNSGTALGLRVKDGVVLAVEKLLVSKMLVPNTNRRIHTVDRHCGLAMSGLVADGRQLVSRGRAEATSYREFYGTDISGKVLNERLSNFVQLYSLYGSVRPFGTSVILGCVDKNGPQLYMIEPSGISWGYFGVAIGKGARAAKTEIEKLKLSEMTAREAIKEAAKIIYSVHDDAKDKAFELELSWVCEETGNLHKFVPKDLLEEAEKYAKQALEEEEDMSEEED.

This sequence belongs to the peptidase T1A family. In terms of assembly, the 26S proteasome consists of a 20S proteasome core and two 19S regulatory subunits. The 20S proteasome core is composed of 28 subunits that are arranged in four stacked rings, resulting in a barrel-shaped structure. The two end rings are each formed by seven alpha subunits, and the two central rings are each formed by seven beta subunits. The catalytic chamber with the active sites is on the inside of the barrel.

It localises to the cytoplasm. The protein localises to the nucleus. Functionally, the proteasome is a multicatalytic proteinase complex which is characterized by its ability to cleave peptides with Arg, Phe, Tyr, Leu, and Glu adjacent to the leaving group at neutral or slightly basic pH. The proteasome has an ATP-dependent proteolytic activity. The sequence is that of Proteasome subunit alpha type-3 from Acanthamoeba castellanii (Amoeba).